A 919-amino-acid chain; its full sequence is Isoleucine--tRNA ligase (919 aa).

The short motif at 57–67 is the 'HIGH' region element; sequence PYANGNIHIGH. E569 is an L-isoleucyl-5'-AMP binding site. Positions 610–614 match the 'KMSKS' region motif; the sequence is KMSKS. Residue K613 participates in ATP binding. The Zn(2+) site is built by C896, C899, C911, and C914.

Belongs to the class-I aminoacyl-tRNA synthetase family. IleS type 1 subfamily. As to quaternary structure, monomer. Zn(2+) is required as a cofactor.

It localises to the cytoplasm. The enzyme catalyses tRNA(Ile) + L-isoleucine + ATP = L-isoleucyl-tRNA(Ile) + AMP + diphosphate. In terms of biological role, catalyzes the attachment of isoleucine to tRNA(Ile). As IleRS can inadvertently accommodate and process structurally similar amino acids such as valine, to avoid such errors it has two additional distinct tRNA(Ile)-dependent editing activities. One activity is designated as 'pretransfer' editing and involves the hydrolysis of activated Val-AMP. The other activity is designated 'posttransfer' editing and involves deacylation of mischarged Val-tRNA(Ile). This is Isoleucine--tRNA ligase from Aliarcobacter butzleri (strain RM4018) (Arcobacter butzleri).